Here is a 183-residue protein sequence, read N- to C-terminus: Hypoxanthine/guanine phosphoribosyltransferase (183 aa).

Belongs to the purine/pyrimidine phosphoribosyltransferase family. Archaeal HPRT subfamily. In terms of assembly, homodimer.

Its subcellular location is the cytoplasm. It carries out the reaction IMP + diphosphate = hypoxanthine + 5-phospho-alpha-D-ribose 1-diphosphate. The enzyme catalyses GMP + diphosphate = guanine + 5-phospho-alpha-D-ribose 1-diphosphate. It participates in purine metabolism; IMP biosynthesis via salvage pathway; IMP from hypoxanthine: step 1/1. Its function is as follows. Catalyzes a salvage reaction resulting in the formation of IMP that is energically less costly than de novo synthesis. The polypeptide is Hypoxanthine/guanine phosphoribosyltransferase (Methanothermococcus okinawensis (strain DSM 14208 / JCM 11175 / IH1)).